The sequence spans 182 residues: Ribulose bisphosphate carboxylase small subunit, chloroplastic (182 aa).

The transit peptide at 1–58 (MASSMLSTATVASINRVSPAQATMVAPFTGLKSTPVFPTTRKTNSDITSITSNGGKVQ) directs the protein to the chloroplast.

This sequence belongs to the RuBisCO small chain family. Heterohexadecamer of 8 large and 8 small subunits.

Its subcellular location is the plastid. It localises to the chloroplast. Its function is as follows. RuBisCO catalyzes two reactions: the carboxylation of D-ribulose 1,5-bisphosphate, the primary event in carbon dioxide fixation, as well as the oxidative fragmentation of the pentose substrate. Both reactions occur simultaneously and in competition at the same active site. Although the small subunit is not catalytic it is essential for maximal activity. This chain is Ribulose bisphosphate carboxylase small subunit, chloroplastic, found in Manihot esculenta (Cassava).